A 217-amino-acid polypeptide reads, in one-letter code: NADPH-dependent 3-demethoxyubiquinone 3-hydroxylase, mitochondrial (217 aa).

2 repeat units span residues 48–129 and 130–217. The segment at 48–217 is 2 X approximate tandem repeats; the sequence is AVDQIIRVDH…SAAIYLSERF (170 aa). Fe cation-binding residues include E60, E90, H93, E142, E178, and H181. Residues Y212 and R216 each contribute to the NADH site.

This sequence belongs to the COQ7 family. In terms of assembly, component of a multi-subunit COQ enzyme complex. Interacts with COQ8B and COQ6. Interacts with COQ9. The cofactor is Fe cation.

The protein resides in the mitochondrion inner membrane. It catalyses the reaction a 5-methoxy-2-methyl-3-(all-trans-polyprenyl)benzoquinone + NADH + O2 = a 3-demethylubiquinone + NAD(+) + H2O. Its pathway is cofactor biosynthesis; ubiquinone biosynthesis. Catalyzes the hydroxylation of the 5-methoxy-2-methyl-3-(all-trans-polyprenyl)benzoquinone at the C6 position and participates in the biosynthesis of ubiquinone. Catalyzes the reaction through a substrate-mediated reduction pathway, whereby NADH shuttles electrons to 5-methoxy-2-methyl-3-(all-trans-decaprenyl)benzoquinone, which then transfers the electrons to the two Fe(3+) centers. The binding of 5-methoxy-2-methyl-3-(all-trans-polyprenyl)benzoquinone (DMQn) mediates reduction of the diiron center by nicotinamide adenine dinucleotide (NADH) and initiates oxygen activation for subsequent DMQ hydroxylation. The physiological substrates are 5-methoxy-2-methyl-3-(all-trans-nonaprenyl)benzoquinone (DMQ(9)) and 5-methoxy-2-methyl-3-(all-trans-decaprenyl)benzoquinone (DMQ(10)), however in vitro the enzyme does not have any specificity concerning the length of the polyprenyl tail, and accepts tails of various lengths with similar efficiency. Also has a structural role in the COQ enzyme complex, stabilizing other COQ polypeptides. Involved in lifespan determination in a ubiquinone-independent manner. Plays a role in modulating mitochondrial stress responses, acting in the nucleus, perhaps via regulating gene expression, independent of its characterized mitochondrial function in ubiquinone biosynthesis. The protein is NADPH-dependent 3-demethoxyubiquinone 3-hydroxylase, mitochondrial of Rattus norvegicus (Rat).